We begin with the raw amino-acid sequence, 107 residues long: Small leucine-rich protein 1 (107 aa).

Helical transmembrane passes span 19–39 (AALV…LAMS) and 53–73 (FLFF…IAYF). Residues 85 to 107 (SQNCDRQHNPKDGSSLYQRMKWT) form a disordered region.

It localises to the membrane. The sequence is that of Small leucine-rich protein 1 (SMLR1) from Homo sapiens (Human).